The following is a 534-amino-acid chain: Solute carrier family 22 member 15 (534 aa).

Residues 22-42 form a helical membrane-spanning segment; the sequence is FLLAVLLQLYSATEAIIITIL. Asn52, Asn58, and Asn83 each carry an N-linked (GlcNAc...) asparagine glycan. 11 helical membrane-spanning segments follow: residues 97–117, 136–156, 161–181, 191–211, 216–236, 297–317, 327–347, 356–376, 391–411, 424–444, and 450–470; these read AAYEVSVSSSVYFGGVLIGVI, LALEVVFAVMNALTPIFPLFL, LVGVMNGGMSLVAFVLLNECI, SLGSLCFAVGIAQFALIGYFI, LLALLVNVQGAAVLALSLCIP, TLIMMWVWFVCSLVYYGLTLS, LNLALSGLAELPAYPLCMYLI, GSLAGFLCVGGGACLLIMLVP, TLSLLGKLNISAAFNIVYIYS, MGVCSMFSRIGGIIAPFIPAL, and ALPFIVFGAAGVSAGLLSLLL. Residue Asn513 is glycosylated (N-linked (GlcNAc...) asparagine).

It belongs to the major facilitator (TC 2.A.1) superfamily. Organic cation transporter (TC 2.A.1.19) family.

Its subcellular location is the membrane. Probably transports organic cations. This chain is Solute carrier family 22 member 15 (slc22a15), found in Xenopus tropicalis (Western clawed frog).